Here is a 159-residue protein sequence, read N- to C-terminus: Transcription elongation factor GreA (159 aa).

Residues 45 to 67 (NAEYHEARKEQSFVEGKIRELQL) adopt a coiled-coil conformation.

Belongs to the GreA/GreB family.

In terms of biological role, necessary for efficient RNA polymerase transcription elongation past template-encoded arresting sites. The arresting sites in DNA have the property of trapping a certain fraction of elongating RNA polymerases that pass through, resulting in locked ternary complexes. Cleavage of the nascent transcript by cleavage factors such as GreA or GreB allows the resumption of elongation from the new 3'terminus. GreA releases sequences of 2 to 3 nucleotides. The protein is Transcription elongation factor GreA of Neorickettsia sennetsu (strain ATCC VR-367 / Miyayama) (Ehrlichia sennetsu).